The following is a 300-amino-acid chain: MVKQRTLNRVVKASGIGLHSGQKVMINFIPHTVDGGIVFRRIDLDPPVDIPANALLIQEAFMCSNLVTGDIKVGTIEHVMSAIAGLGIDNLIVEVSASEVPIMDGSAGPFIYLLMQGGLREQDAPKKFIKILKPVEALIDDKKAIFSPHNGFQLNFTIDFDHPAFAKEYQSATIDFSTETFVYEVSEARTFGFMKDLDYLKANNLALGASLDNAIGVDDTGVVNEEGLRFADEFVRHKILDAVGDLYLLGHQIIAKFDGYKSGHALNNQLLRNVQSDPSNYEIVTFDDEKDCPIPYVSVT.

His78, His237, and Asp241 together coordinate Zn(2+). The active-site Proton donor is His264.

This sequence belongs to the LpxC family. Requires Zn(2+) as cofactor.

The catalysed reaction is a UDP-3-O-[(3R)-3-hydroxyacyl]-N-acetyl-alpha-D-glucosamine + H2O = a UDP-3-O-[(3R)-3-hydroxyacyl]-alpha-D-glucosamine + acetate. It participates in glycolipid biosynthesis; lipid IV(A) biosynthesis; lipid IV(A) from (3R)-3-hydroxytetradecanoyl-[acyl-carrier-protein] and UDP-N-acetyl-alpha-D-glucosamine: step 2/6. Functionally, catalyzes the hydrolysis of UDP-3-O-myristoyl-N-acetylglucosamine to form UDP-3-O-myristoylglucosamine and acetate, the committed step in lipid A biosynthesis. This chain is UDP-3-O-acyl-N-acetylglucosamine deacetylase, found in Acinetobacter baumannii (strain AB307-0294).